A 284-amino-acid chain; its full sequence is MNKKNNLLVLEDGVKVILAPAKVNFGLWIKGKRPDGYHDIFSIIHTIDLYDRIYIELHYTLEVLSVGPFSKNLKDNIVYEGVLAFSRLTGKNFDYKIVIEKNIPVGAGLGGASSDLAAVISYLNEELENPMKEQELTDFLSSFSKDAPFFLKGGCALVYGTGDQVKVLEPISREITVVYPNIEASTSKVYGAFTKQTEEVLLLEDILRLLEENDIENIIENHLQETAIEIYKEIGELIRFLESVGYKPYMSGSGSSVYVFGKLSDKIKMALESRGWYVYECKTI.

Lys-22 is a catalytic residue. Residue Pro-104–Ser-114 coordinates ATP. Asp-146 is an active-site residue.

The protein belongs to the GHMP kinase family. IspE subfamily.

The catalysed reaction is 4-CDP-2-C-methyl-D-erythritol + ATP = 4-CDP-2-C-methyl-D-erythritol 2-phosphate + ADP + H(+). The protein operates within isoprenoid biosynthesis; isopentenyl diphosphate biosynthesis via DXP pathway; isopentenyl diphosphate from 1-deoxy-D-xylulose 5-phosphate: step 3/6. Catalyzes the phosphorylation of the position 2 hydroxy group of 4-diphosphocytidyl-2C-methyl-D-erythritol. This is 4-diphosphocytidyl-2-C-methyl-D-erythritol kinase from Hydrogenobaculum sp. (strain Y04AAS1).